The chain runs to 3147 residues: Probable polyketide synthase 1 (3147 aa).

The Ketosynthase family 3 (KS3) domain occupies 12–457 (SSDVAVIGVG…GSNCHLIIQE (446 aa)). Residues cysteine 180 and histidine 319 each act as for beta-ketoacyl synthase activity in the active site. Positions 345 to 369 (QLNNFSTDGNDNDDDDDDNTSPEPL) are disordered. The span at 354–364 (NDNDDDDDDNT) shows a compositional bias: acidic residues. Histidine 380 acts as the For beta-ketoacyl synthase activity in catalysis. Residues 672–705 (GIYPSISVGHSFGEVSSYYLSGIISLETACKIVY) are acyl/malonyl transferase. Catalysis depends on serine 682, which acts as the For acyl/malonyl transferase activity. The interval 976–1127 (NRLEGPTTSL…ATISLEQQQP (152 aa)) is N-terminal hotdog fold. Residues 976 to 1298 (NRLEGPTTSL…IKSTNPKSTK (323 aa)) enclose the PKS/mFAS DH domain. Histidine 1014 acts as the Proton acceptor; for dehydratase activity in catalysis. The segment at 1149 to 1298 (DISKLDKFEL…IKSTNPKSTK (150 aa)) is C-terminal hotdog fold. Residue aspartate 1209 is the Proton donor; for dehydratase activity of the active site. The Carrier domain maps to 2568-2645 (SSNISLQDKI…SFLEKVNGLS (78 aa)). At serine 2605 the chain carries O-(pantetheine 4'-phosphoryl)serine. The interval 2723–2747 (PSLSQSDVLKTPPIKSLNNTKNSSL) is disordered. Over residues 2738–2747 (SLNNTKNSSL) the composition is skewed to polar residues. Positions 2789–3147 (VLGIGISVPG…FEGCFLKNVV (359 aa)) are chalcone synthase. Cysteine 2930 is a catalytic residue.

It in the C-terminal section; belongs to the thiolase-like superfamily. Chalcone/stilbene synthases family. Homodimer. Pantetheine 4'-phosphate serves as cofactor.

It carries out the reaction (E)-4-coumaroyl-CoA + 3 malonyl-CoA + 3 H(+) = 2',4,4',6'-tetrahydroxychalcone + 3 CO2 + 4 CoA. Its pathway is secondary metabolite biosynthesis; flavonoid biosynthesis. Functionally, probable polyketide synthase. Produces only acylpyrones; in vitro. This Dictyostelium discoideum (Social amoeba) protein is Probable polyketide synthase 1 (stlA).